The sequence spans 326 residues: Probable cell division protein WhiA (326 aa).

The segment at residues serine 275–alanine 308 is a DNA-binding region (H-T-H motif).

This sequence belongs to the WhiA family.

Involved in cell division and chromosome segregation. The chain is Probable cell division protein WhiA from Thermobifida fusca (strain YX).